We begin with the raw amino-acid sequence, 325 residues long: SPbeta prophage-derived uncharacterized protein YopR (325 aa).

The protein is SPbeta prophage-derived uncharacterized protein YopR (yopR) of Bacillus subtilis (strain 168).